The following is a 240-amino-acid chain: NAD(P)H-hydrate epimerase (240 aa).

The YjeF N-terminal domain occupies 15–224 (AQEIDAELMG…SYNLKLPCYP (210 aa)). 66 to 70 (NQGGD) is a binding site for (6S)-NADPHX. Residues Gln-67 and Asp-129 each contribute to the K(+) site. (6S)-NADPHX is bound by residues 133–139 (GFSFHSE) and Asp-162. Ser-165 contributes to the K(+) binding site.

It belongs to the NnrE/AIBP family. Requires K(+) as cofactor.

It localises to the cytoplasm. It is found in the mitochondrion. It carries out the reaction (6R)-NADHX = (6S)-NADHX. The enzyme catalyses (6R)-NADPHX = (6S)-NADPHX. In terms of biological role, catalyzes the epimerization of the S- and R-forms of NAD(P)HX, a damaged form of NAD(P)H that is a result of enzymatic or heat-dependent hydration. This is a prerequisite for the S-specific NAD(P)H-hydrate dehydratase to allow the repair of both epimers of NAD(P)HX. The sequence is that of NAD(P)H-hydrate epimerase from Puccinia graminis f. sp. tritici (strain CRL 75-36-700-3 / race SCCL) (Black stem rust fungus).